A 258-amino-acid polypeptide reads, in one-letter code: MASTSLLQSTSSSFAGVRFHCRTSAAPRVGLSSFTVKAAAGTAVFVDKAEAETINRLKTNYIEKMVPLLKEEFSYSNILEVPKVVKIVVNCGIGDASQNAKGLDAAINELALITGQRPVKTKAKTSIAGFKVREGMTLGIAVTLRGNLMYSFLDRLINLALPRTRDFQGVNPNSFDGHGNYSVGFREQSVFPEIKPEIVGKARGMDVCITTTAKTDKEAYKLLSLMGMPFREGSGPSTLVRKKKLKSHHFDAKKGRRY.

Residues 1–38 (MASTSLLQSTSSSFAGVRFHCRTSAAPRVGLSSFTVKA) constitute a chloroplast transit peptide.

As to quaternary structure, component of the chloroplast large ribosomal subunit (LSU). Mature 70S chloroplast ribosomes of higher plants consist of a small (30S) and a large (50S) subunit. The 30S small subunit contains 1 molecule of ribosomal RNA (16S rRNA) and 24 different proteins. The 50S large subunit contains 3 rRNA molecules (23S, 5S and 4.5S rRNA) and 33 different proteins.

The protein resides in the plastid. It is found in the chloroplast. In terms of biological role, component of the chloroplast ribosome (chloro-ribosome), a dedicated translation machinery responsible for the synthesis of chloroplast genome-encoded proteins, including proteins of the transcription and translation machinery and components of the photosynthetic apparatus. The polypeptide is Large ribosomal subunit protein uL5c (RPL5) (Spinacia oleracea (Spinach)).